The primary structure comprises 502 residues: Actin-binding protein WASF3 (502 aa).

Residues 57–93 are a coiled coil; the sequence is NEANNFYIRANSLQDRIDRLAVKVTQLDSTVEEVSLQ. At tyrosine 151 the chain carries Phosphotyrosine; by ABL1. The stretch at 162-206 forms a coiled coil; the sequence is KEKMLQDTEDKRKEKRRQKEQKRIDGTTREVKKVRKARNRRQEWN. 2 disordered regions span residues 169 to 210 and 223 to 443; these read TEDK…MMAY and SVYH…ARSD. Residues 182-192 show a composition bias toward basic and acidic residues; that stretch reads QKRIDGTTREV. Residues 223 to 237 are compositionally biased toward polar residues; sequence SVYHGASSEGSLSPD. Position 248 is a phosphotyrosine; by ABL1 (tyrosine 248). The segment covering 302–312 has biased composition (pro residues); that stretch reads QQPPPPPPPQA. Phosphotyrosine; by ABL1 is present on tyrosine 337. 2 stretches are compositionally biased toward pro residues: residues 341-352 and 394-410; these read SGPPPPPPPPVI and APPP…PPGP. The segment covering 411 to 423 has biased composition (low complexity); it reads GSSLSSSPMHGPP. Positions 440-457 constitute a WH2 domain; it reads ARSDLLAAIRMGIQLKKV. Tyrosine 486 carries the phosphotyrosine; by ABL1 modification.

This sequence belongs to the SCAR/WAVE family. In terms of assembly, binds actin and the Arp2/3 complex. In terms of processing, phosphorylation by ABL1 promotes lamellipodia formation and cell migration. As to expression, expressed in ovary and brain.

The protein resides in the cytoplasm. The protein localises to the cytoskeleton. In terms of biological role, downstream effector molecules involved in the transmission of signals from tyrosine kinase receptors and small GTPases to the actin cytoskeleton. Plays a role in the regulation of cell morphology and cytoskeletal organization. Required in the control of cell shape. The sequence is that of Actin-binding protein WASF3 (WASF3) from Homo sapiens (Human).